The primary structure comprises 515 residues: 1-pyrroline-5-carboxylate dehydrogenase (515 aa).

Residues glutamate 286 and cysteine 320 contribute to the active site.

It belongs to the aldehyde dehydrogenase family. RocA subfamily.

The enzyme catalyses L-glutamate 5-semialdehyde + NAD(+) + H2O = L-glutamate + NADH + 2 H(+). It participates in amino-acid degradation; L-proline degradation into L-glutamate; L-glutamate from L-proline: step 2/2. The protein is 1-pyrroline-5-carboxylate dehydrogenase of Geobacillus thermodenitrificans (strain NG80-2).